Reading from the N-terminus, the 304-residue chain is Cell surface-binding protein OPG105 (304 aa).

The 235-residue stretch at 1-235 (MPQQLSPINI…NDDTQVYYSG (235 aa)) folds into the Alpha-carbonic anhydrase domain. Residues 1 to 275 (MPQQLSPINI…YQKYIEENKT (275 aa)) lie on the Virion surface side of the membrane. The chain crosses the membrane as a helical span at residues 276–294 (FAIIAIVFVFILTAILFFM). Topologically, residues 295–304 (SRRYSREKQN) are intravirion.

Belongs to the alpha-carbonic anhydrase family. As to quaternary structure, homodimer; disulfide-linked. In terms of processing, apparently non-glycosylated.

It localises to the virion membrane. Binds to chondroitin sulfate on the cell surface to provide virion attachment to target cell. The protein is Cell surface-binding protein OPG105 (OPG105) of Bos taurus (Bovine).